Consider the following 184-residue polypeptide: C-phycoerythrin class 1 subunit beta (184 aa).

(2R,3E)-phycoerythrobilin contacts are provided by Cys50 and Cys61. The residue at position 72 (Asn72) is an N4-methylasparagine. (2R,3E)-phycoerythrobilin-binding residues include Cys82 and Cys165.

The protein belongs to the phycobiliprotein family. Heterodimer of an alpha and a beta chain. Post-translationally, contains three covalently linked bilin chromophores.

The protein localises to the cellular thylakoid membrane. Functionally, light-harvesting photosynthetic bile pigment-protein from the phycobiliprotein complex. This is C-phycoerythrin class 1 subunit beta (cpeB) from Synechococcus sp. (strain WH7803).